A 538-amino-acid polypeptide reads, in one-letter code: Natural resistance-associated macrophage protein 1 (538 aa).

The tract at residues 1-36 (MTGDTDPPKQSRTQYGSISSSPSPGPPQVPPGGTYL) is disordered. Over 1–54 (MTGDTDPPKQSRTQYGSISSSPSPGPPQVPPGGTYLSEKIPIPNAEPGTFSLRK) the chain is Cytoplasmic. Residues 55–75 (LWAFTGPGFLMSIAYLDPGNI) form a helical membrane-spanning segment. Residues 76–81 (QSDLQA) are Extracellular-facing. Residues 82 to 102 (GAVAGFKLLWVLLWATVLGLL) form a helical membrane-spanning segment. Topologically, residues 103 to 139 (CQRLAARLGVVTGKDLGEICHLYYPKVPRTLLWLNME) are cytoplasmic. Residues 140 to 160 (LAIVGSDMQEVIGTAIAFNLL) traverse the membrane as a helical segment. Residues 161–164 (SAGR) lie on the Extracellular side of the membrane. Residues 165–185 (IPLWGGVLITVVDTFFFLYLN) traverse the membrane as a helical segment. Topologically, residues 186 to 193 (NYGLRKLE) are cytoplasmic. The helical transmembrane segment at 194–214 (AFFAFLIAIMAFTFGYEYVVA) threads the bilayer. Residues 215–240 (RPAQGALLRGLFLPSCSGCGQPELLQ) are Extracellular-facing. A helical transmembrane segment spans residues 241–261 (AVGIVGAIIMPHNIYLHSALV). Over 262 to 286 (KSREVDRTRREDIREANMYFLIEST) the chain is Cytoplasmic. A helical membrane pass occupies residues 287-307 (IALFVSFFINLFVMAVFGQAF). The Extracellular portion of the chain corresponds to 308–346 (YQQTNQAAFNICANSSLHDYAKIFPRNNLTVAVDFYQGG). N-linked (GlcNAc...) asparagine glycosylation is found at asparagine 321 and asparagine 335. The chain crosses the membrane as a helical span at residues 347–367 (VILGCLFGPAALYIWAVGLLA). Topologically, residues 368–394 (AGQSSTMTGTYAGQFVMEGFLKLRWSR) are cytoplasmic. A helical membrane pass occupies residues 395 to 415 (FARLLLTRSCAILPALLVAVF). Topologically, residues 416–432 (KELQDLSSLNDLLNVLQ) are extracellular. Residues 433–453 (SLLLPFAVLPILTFTSMPALM) form a helical membrane-spanning segment. Topologically, residues 454 to 468 (QEFASGRVNKVITSS) are cytoplasmic. A helical transmembrane segment spans residues 469 to 489 (IMLLVCAINFYFLVSYLPSLP). At 490-492 (HPA) the chain is on the extracellular side. Residues 493–513 (YFGLVALLAVIYLGLTTYLVW) traverse the membrane as a helical segment. The Cytoplasmic segment spans residues 514–538 (TCLIAHGATLLVHSSHQHFLYGLLE).

The protein belongs to the NRAMP family.

It localises to the late endosome membrane. The protein localises to the lysosome membrane. It catalyses the reaction Zn(2+)(in) + H(+)(out) = Zn(2+)(out) + H(+)(in). The enzyme catalyses Fe(2+)(in) + H(+)(out) = Fe(2+)(out) + H(+)(in). The catalysed reaction is Mn(2+)(in) + H(+)(out) = Mn(2+)(out) + H(+)(in). Functionally, macrophage-specific antiporter that fluxes metal ions in either direction against a proton gradient. Localized to late endosomal lysosomal membranes, delivers bivalent cations from the cytosol into these acidic compartments where they may directly affect antimicrobial activity. Involved in iron metabolism and host natural resistance to infection with intracellular parasites. Pathogen resistance involves sequestration of Fe(2+) and Mn(2+), cofactors of both prokaryotic and eukaryotic catalases and superoxide dismutases, not only to protect the macrophage against its own generation of reactive oxygen species, but to deny the cations to the pathogen for synthesis of its protective enzymes. This Sus scrofa (Pig) protein is Natural resistance-associated macrophage protein 1 (SLC11A1).